Reading from the N-terminus, the 243-residue chain is Putative C-type lectin protein A7 (243 aa).

A helical membrane pass occupies residues 23 to 43 (IFFILAATNLMIAAFALGCLA). The region spanning 116–223 (GQKACYYVPP…CTTSKLCLCG (108 aa)) is the C-type lectin domain. 2 cysteine pairs are disulfide-bonded: Cys-137/Cys-222 and Cys-198/Cys-214.

Its subcellular location is the host membrane. This Alcelaphine herpesvirus 1 (strain C500) (AlHV-1) protein is Putative C-type lectin protein A7 (A7).